A 274-amino-acid chain; its full sequence is Nickel/cobalt efflux system RcnA (274 aa).

The Periplasmic portion of the chain corresponds to 1 to 12 (MTEFTTLLQQGN). A helical membrane pass occupies residues 13–33 (AWFFIPSAILLGALHGLEPGH). Residues 34 to 56 (SKTMMAAFIIAIKGTIKQAVMLG) lie on the Cytoplasmic side of the membrane. Residues 57 to 77 (LAATISHTAVVWLIAFGGMVI) traverse the membrane as a helical segment. At 78–86 (SKRFTAQSA) the chain is on the periplasmic side. Residues 87–107 (EPWLQLISAVIIIGTAFWMFW) form a helical membrane-spanning segment. Residues 108–174 (RTWRGERNWL…FDGREVTNWQ (67 aa)) lie on the Cytoplasmic side of the membrane. The segment at 130 to 149 (HDHEDHHDHGHHHHHEHGEY) is disordered. Residues 175–195 (ILLFGLTGGLIPCPAAITVLL) traverse the membrane as a helical segment. Topologically, residues 196–209 (ICIQLKALTLGATL) are periplasmic. A helical membrane pass occupies residues 210 to 230 (VVSFSIGLALTLVTVGVGAAI). The Cytoplasmic segment spans residues 231–251 (SVQQVAKRWSGFNTLAKRAPY). A helical transmembrane segment spans residues 252–272 (FSSLLIGLVGVYMGVHGFMGI). At 273–274 (MR) the chain is on the periplasmic side.

The protein belongs to the NiCoT transporter (TC 2.A.52) family. RcnA subfamily.

It is found in the cell inner membrane. In terms of biological role, efflux system for nickel and cobalt. This Shigella sonnei (strain Ss046) protein is Nickel/cobalt efflux system RcnA (rcnA).